The following is a 176-amino-acid chain: Peptidyl-prolyl cis-trans isomerase CYP19-3 (176 aa).

Residues 7 to 170 (FFDILIGKMK…ERVVIEDCGE (164 aa)) form the PPIase cyclophilin-type domain.

The protein belongs to the cyclophilin-type PPIase family. Ubiquitous, with highest levels in flowers and lowest levels in roots.

It is found in the cytoplasm. It carries out the reaction [protein]-peptidylproline (omega=180) = [protein]-peptidylproline (omega=0). Binds cyclosporin A (CsA). CsA mediates some of its effects via an inhibitory action on PPIase. In terms of biological role, PPIases accelerate the folding of proteins. It catalyzes the cis-trans isomerization of proline imidic peptide bonds in oligopeptides. In Arabidopsis thaliana (Mouse-ear cress), this protein is Peptidyl-prolyl cis-trans isomerase CYP19-3 (CYP19-3).